A 384-amino-acid polypeptide reads, in one-letter code: Sodium channel protein Nach (384 aa).

Over 1 to 319 (AAFAYFSGFM…LVSHLGSAFS (319 aa)) the chain is Extracellular. Asn32 and Asn215 each carry an N-linked (GlcNAc...) asparagine glycan. A helical membrane pass occupies residues 320 to 340 (LFVGMSMLSLVEIIYYFTVIL). Residues 341-384 (RRNYVQECRARQKLQTLHRRPNFGWPGDKNSNQQKSVFYIRGRN) are Cytoplasmic-facing.

This sequence belongs to the amiloride-sensitive sodium channel (TC 1.A.6) family.

Its subcellular location is the membrane. Functionally, part of a complex that plays a role in tracheal liquid clearance. Probable role in sodium transport. The polypeptide is Sodium channel protein Nach (Nach) (Drosophila virilis (Fruit fly)).